The primary structure comprises 204 residues: MKKIAVTCALLSAFAVSSVWADAAGDLKSRLDKVSSFHASFTQKVTDGSGAAVQEGQGDLWVKRPNLFNWHMTQPDESVLISDGKTLWFYNPFVEQASATWLKDATSNTPFMLIARNQSSDWQQYNIKQNGDDFVLTPKSASGNLKQFTINVSRDGTINQFSAVEQDDQRSSYQLKSQQNGAVDMSKFTFTPPQGVTVDDQRNK.

Residues 1–21 form the signal peptide; the sequence is MKKIAVTCALLSAFAVSSVWA. The disordered stretch occupies residues 169-204; the sequence is QRSSYQLKSQQNGAVDMSKFTFTPPQGVTVDDQRNK. Residues 171–181 show a composition bias toward polar residues; sequence SSYQLKSQQNG.

This sequence belongs to the LolA family. As to quaternary structure, monomer.

The protein localises to the periplasm. In terms of biological role, participates in the translocation of lipoproteins from the inner membrane to the outer membrane. Only forms a complex with a lipoprotein if the residue after the N-terminal Cys is not an aspartate (The Asp acts as a targeting signal to indicate that the lipoprotein should stay in the inner membrane). This is Outer-membrane lipoprotein carrier protein from Cronobacter sakazakii (strain ATCC BAA-894) (Enterobacter sakazakii).